A 277-amino-acid polypeptide reads, in one-letter code: tRNA (guanine-N(7)-)-methyltransferase (277 aa).

Positions methionine 1–arginine 37 are disordered. The residue at position 28 (serine 28) is a Phosphoserine. Residues glycine 85, glutamate 108, arginine 110, asparagine 141, alanine 142, and leucine 161 each coordinate S-adenosyl-L-methionine. Aspartate 164 is a catalytic residue. Positions proline 165–lysine 173 are alphaC helix. Threonine 239 and glutamate 241 together coordinate S-adenosyl-L-methionine. The alpha6 helix stretch occupies residues threonine 239–arginine 247.

This sequence belongs to the class I-like SAM-binding methyltransferase superfamily. TrmB family. In terms of assembly, catalytic component of the METTL1-WDR4 complex, composed of METTL1 and WDR4. In terms of processing, phosphorylation at Ser-28 by PKB/AKT1 inactivates its methyltransferase activity via a steric interference mechanism in the active site that locally disrupts the catalytic center. Phosphorylation at Ser-28 does not affect the interaction with WDR4.

It is found in the nucleus. It catalyses the reaction guanosine(46) in tRNA + S-adenosyl-L-methionine = N(7)-methylguanosine(46) in tRNA + S-adenosyl-L-homocysteine. The enzyme catalyses a guanosine in mRNA + S-adenosyl-L-methionine = an N(7)-methylguanosine in mRNA + S-adenosyl-L-homocysteine. It carries out the reaction a guanosine in miRNA + S-adenosyl-L-methionine = an N(7)-methylguanosine in miRNA + S-adenosyl-L-homocysteine. Its pathway is tRNA modification; N(7)-methylguanine-tRNA biosynthesis. In terms of biological role, catalytic component of METTL1-WDR4 methyltransferase complex that mediates the formation of N(7)-methylguanine in a subset of RNA species, such as tRNAs, mRNAs and microRNAs (miRNAs). Catalyzes the formation of N(7)-methylguanine at position 46 (m7G46) in a large subset of tRNAs that contain the 5'-RAGGU-3' motif within the variable loop. M7G46 interacts with C13-G22 in the D-loop to stabilize tRNA tertiary structure and protect tRNAs from decay. Also acts as a methyltransferase for a subset of internal N(7)-methylguanine in mRNAs. Internal N(7)-methylguanine methylation of mRNAs in response to stress promotes their relocalization to stress granules, thereby suppressing their translation. Also methylates a specific subset of miRNAs, such as let-7. N(7)-methylguanine methylation of let-7 miRNA promotes let-7 miRNA processing by disrupting an inhibitory secondary structure within the primary miRNA transcript (pri-miRNA). Acts as a regulator of embryonic stem cell self-renewal and differentiation. This is tRNA (guanine-N(7)-)-methyltransferase from Bos taurus (Bovine).